We begin with the raw amino-acid sequence, 403 residues long: Propionate kinase (403 aa).

The protein belongs to the acetokinase family. PduW subfamily.

It is found in the cytoplasm. The enzyme catalyses propanoate + ATP = propanoyl phosphate + ADP. Its pathway is polyol metabolism; 1,2-propanediol degradation. In terms of biological role, works with phosphate acetyltransferase (pta) to capture exogenous propionate and regenerate propionyl-CoA during degradation of 1,2-propanediol (1,2-PD). This chain is Propionate kinase, found in Citrobacter rodentium (strain ICC168) (Citrobacter freundii biotype 4280).